Consider the following 418-residue polypeptide: Thyroxine-binding globulin (418 aa).

A signal peptide spans 1–20 (MSMFFYLFLLVLGLQATIHC). 6 N-linked (GlcNAc...) asparagine glycosylation sites follow: Asn24, Asn39, Asn102, Asn168, Asn227, and Asn256. Asn296 and Lys401 together coordinate thyroxine.

The protein belongs to the serpin family. Expressed by the liver and secreted in plasma.

It is found in the secreted. Major thyroid hormone transport protein in serum. The chain is Thyroxine-binding globulin (Serpina7) from Rattus norvegicus (Rat).